The primary structure comprises 155 residues: UPF0461 protein C5orf24 homolog (155 aa).

The span at 1–10 (MMHPVASSNP) shows a compositional bias: polar residues. Residues 1 to 20 (MMHPVASSNPAFCGPGKPSC) form a disordered region. S37 carries the post-translational modification Phosphoserine. The interval 40–155 (SKYSHTVNHK…QQAFRCSSDA (116 aa)) is disordered. The segment covering 57 to 70 (DPLNETHLQTTSGR) has biased composition (polar residues). Residue K75 forms a Glycyl lysine isopeptide (Lys-Gly) (interchain with G-Cter in SUMO2) linkage. Positions 80–92 (KKKNLNRSGKRGR) are enriched in basic residues. The span at 94-107 (SGTTKSAGYRTSTG) shows a compositional bias: polar residues. S121 carries the post-translational modification Phosphoserine.

It belongs to the UPF0461 family.

The polypeptide is UPF0461 protein C5orf24 homolog (Pongo abelii (Sumatran orangutan)).